Consider the following 455-residue polypeptide: MSLVTDSPSLPEAAADSPLLAQVQLARAAARCTATLPTAIKNAALEAMATALLEHQEAILAANQADLEQAAEQVKAGELSASAYARLKLDAQKLADAVAGVRQVLRLPDPVGQALLIRELDEGLVLERRTYPLGVLGVIFESRPDALVQIAALAVKTGNSVLLKGGSEGLCSCQALMAAIQAGLQQIPEFPQGSLQLLTSRAEVKALLQLEGLVDLIIPRGSSSFVRYIMENTRIPVLGHADGLCHLYVDRAADVDMAVRLTLDSKTQYPAACNAIETLLVHAEIAPRFLPLAVQALREKGVELRGDPRCRQLVPDLIPATEDDWSTEYADLILSIKVVGSLDEAIAHIERYGSRHTEAIVTEDAAAAQRFLDEVDAAGVFHNASTRFADGFRYGLGAEVGISTQKLPPRGPVGLEGLVTYRYQLRGRGHLVADYTGPQARPFQHRDRLNTTGLS.

Belongs to the gamma-glutamyl phosphate reductase family.

The protein localises to the cytoplasm. It carries out the reaction L-glutamate 5-semialdehyde + phosphate + NADP(+) = L-glutamyl 5-phosphate + NADPH + H(+). It functions in the pathway amino-acid biosynthesis; L-proline biosynthesis; L-glutamate 5-semialdehyde from L-glutamate: step 2/2. Its function is as follows. Catalyzes the NADPH-dependent reduction of L-glutamate 5-phosphate into L-glutamate 5-semialdehyde and phosphate. The product spontaneously undergoes cyclization to form 1-pyrroline-5-carboxylate. In Synechococcus sp. (strain JA-3-3Ab) (Cyanobacteria bacterium Yellowstone A-Prime), this protein is Gamma-glutamyl phosphate reductase.